Reading from the N-terminus, the 113-residue chain is Large ribosomal subunit protein bL17 (113 aa).

This sequence belongs to the bacterial ribosomal protein bL17 family. Part of the 50S ribosomal subunit. Contacts protein L32.

The chain is Large ribosomal subunit protein bL17 from Natranaerobius thermophilus (strain ATCC BAA-1301 / DSM 18059 / JW/NM-WN-LF).